The chain runs to 349 residues: Draxin (349 aa).

Residues 1–25 (MAGPAIHTAPMLFLVLLLPLELSLA) form the signal peptide. Disordered regions lie at residues 38–79 (PENH…QDGA), 118–145 (PYPEKENRPPGWERTRKRSREHKRRRDR), and 244–273 (DGWPSAKKKEKHRGKLSSDGNETSPAEGEP). A compositionally biased stretch (basic and acidic residues) spans 120–131 (PEKENRPPGWER). 2 stretches are compositionally biased toward basic residues: residues 132–145 (TRKRSREHKRRRDR) and 249–258 (AKKKEKHRGK). N-linked (GlcNAc...) asparagine glycosylation occurs at Asn264.

The protein belongs to the draxin family. Interacts with LRP6.

Its subcellular location is the secreted. Functionally, chemorepulsive axon guidance protein required for the development of spinal cord and forebrain commissures. Acts as a chemorepulsive guidance protein for commissural axons during development. Able to inhibit or repel neurite outgrowth from dorsal spinal cord. Inhibits the stabilization of cytosolic beta-catenin (CTNNB1) via its interaction with LRP6, thereby acting as an antagonist of Wnt signaling pathway. The chain is Draxin from Homo sapiens (Human).